Consider the following 340-residue polypeptide: DNA-directed RNA polymerase subunit alpha (340 aa).

An alpha N-terminal domain (alpha-NTD) region spans residues 1-233 (MIRDEISVST…DLFIPFLRAE (233 aa)). The alpha C-terminal domain (alpha-CTD) stretch occupies residues 268 to 340 (AFKHIFIDQS…DLPKNKFQIH (73 aa)).

Belongs to the RNA polymerase alpha chain family. In plastids the minimal PEP RNA polymerase catalytic core is composed of four subunits: alpha, beta, beta', and beta''. When a (nuclear-encoded) sigma factor is associated with the core the holoenzyme is formed, which can initiate transcription.

The protein resides in the plastid. The protein localises to the chloroplast. It carries out the reaction RNA(n) + a ribonucleoside 5'-triphosphate = RNA(n+1) + diphosphate. Functionally, DNA-dependent RNA polymerase catalyzes the transcription of DNA into RNA using the four ribonucleoside triphosphates as substrates. The chain is DNA-directed RNA polymerase subunit alpha from Cycas taitungensis (Prince sago).